A 207-amino-acid polypeptide reads, in one-letter code: Large ribosomal subunit protein uL4 (207 aa).

Belongs to the universal ribosomal protein uL4 family. As to quaternary structure, part of the 50S ribosomal subunit.

One of the primary rRNA binding proteins, this protein initially binds near the 5'-end of the 23S rRNA. It is important during the early stages of 50S assembly. It makes multiple contacts with different domains of the 23S rRNA in the assembled 50S subunit and ribosome. Its function is as follows. Forms part of the polypeptide exit tunnel. The sequence is that of Large ribosomal subunit protein uL4 from Rickettsia africae (strain ESF-5).